We begin with the raw amino-acid sequence, 582 residues long: Mitogen-activated protein kinase 17 (582 aa).

The tract at residues 22–61 is disordered; that stretch reads SSSFHLTTTGDDTVKDLHDPRREDAEGDGWEEVHEGPESD. The segment covering 33-45 has biased composition (basic and acidic residues); it reads DTVKDLHDPRRED. The Protein kinase domain maps to 105–396; that stretch reads YKVSEVIGKG…AEEALTDPYF (292 aa). Residues 111 to 119 and Lys134 contribute to the ATP site; that span reads IGKGSYGVV. Asp231 serves as the catalytic Proton acceptor. At Thr267 the chain carries Phosphothreonine. The short motif at 267-269 is the TXY element; that stretch reads TDY. Position 269 is a phosphotyrosine (Tyr269). Disordered stretches follow at residues 474–502 and 542–582; these read EGVSKGEKSSPQLRQNASLPRERAIGNKH and ISAS…QLKT. Polar residues predominate over residues 482–491; it reads SSPQLRQNAS. The span at 493 to 502 shows a compositional bias: basic and acidic residues; that stretch reads PRERAIGNKH. Acidic residues predominate over residues 557 to 572; sequence DQEDSLTESMDETADE.

It belongs to the protein kinase superfamily. CMGC Ser/Thr protein kinase family. MAP kinase subfamily. Dually phosphorylated on Thr-267 and Tyr-269, which activates the enzyme.

It catalyses the reaction L-seryl-[protein] + ATP = O-phospho-L-seryl-[protein] + ADP + H(+). It carries out the reaction L-threonyl-[protein] + ATP = O-phospho-L-threonyl-[protein] + ADP + H(+). Activated by threonine and tyrosine phosphorylation. The sequence is that of Mitogen-activated protein kinase 17 (MPK17) from Oryza sativa subsp. japonica (Rice).